The sequence spans 211 residues: Uridine kinase (211 aa).

Residue 12-19 (GGTGSGKT) coordinates ATP.

It belongs to the uridine kinase family.

The protein localises to the cytoplasm. The enzyme catalyses uridine + ATP = UMP + ADP + H(+). It catalyses the reaction cytidine + ATP = CMP + ADP + H(+). It participates in pyrimidine metabolism; CTP biosynthesis via salvage pathway; CTP from cytidine: step 1/3. It functions in the pathway pyrimidine metabolism; UMP biosynthesis via salvage pathway; UMP from uridine: step 1/1. This is Uridine kinase from Halalkalibacterium halodurans (strain ATCC BAA-125 / DSM 18197 / FERM 7344 / JCM 9153 / C-125) (Bacillus halodurans).